We begin with the raw amino-acid sequence, 66 residues long: Large ribosomal subunit protein uL29 (66 aa).

It belongs to the universal ribosomal protein uL29 family.

This chain is Large ribosomal subunit protein uL29, found in Bartonella henselae (strain ATCC 49882 / DSM 28221 / CCUG 30454 / Houston 1) (Rochalimaea henselae).